Reading from the N-terminus, the 245-residue chain is Putative [LysW]-aminoadipate/[LysW]-glutamate kinase (245 aa).

Substrate-binding residues include arginine 60 and asparagine 162.

It belongs to the acetylglutamate kinase family. LysZ subfamily.

Its subcellular location is the cytoplasm. The catalysed reaction is [amino-group carrier protein]-C-terminal-N-(1,4-dicarboxybutan-1-yl)-L-glutamine + ATP = [amino-group carrier protein]-C-terminal-N-(1-carboxy-5-phosphooxy-5-oxopentan-1-yl)-L-glutamine + ADP. The enzyme catalyses [amino-group carrier protein]-C-terminal-gamma-(L-glutamyl)-L-glutamate + ATP = [amino-group carrier protein]-C-terminal-gamma-(5-phospho-L-glutamyl)-L-glutamate + ADP. Its pathway is amino-acid biosynthesis; L-lysine biosynthesis via AAA pathway; L-lysine from L-alpha-aminoadipate (Thermus route): step 2/5. It functions in the pathway amino-acid biosynthesis; L-arginine biosynthesis. In terms of biological role, involved in both the arginine and lysine biosynthetic pathways. Phosphorylates the LysW-bound precursors glutamate (for arginine biosynthesis), respectively alpha-aminoadipate (for lysine biosynthesis). This chain is Putative [LysW]-aminoadipate/[LysW]-glutamate kinase, found in Pyrococcus abyssi (strain GE5 / Orsay).